Here is a 180-residue protein sequence, read N- to C-terminus: Uterocalin (180 aa).

The first 18 residues, 1-18 (MNLLLLAMGLILPRRPHA), serve as a signal peptide directing secretion. Cysteines 82 and 175 form a disulfide. A glycan (N-linked (GlcNAc...) asparagine) is linked at N101.

Belongs to the calycin superfamily. Lipocalin family. As to expression, expressed in glandular and lumenal epithelia of the endometrium. Is transferred to the embryonic capsule, the conceptus and the yolk sac.

The protein localises to the secreted. Binds fatty acids and retinol. Is specialized for the preattachment embryo. May be important to maintain the pregnancy and may transport small hydrophobic ligands from mother to the developing embryo. This is Uterocalin from Equus caballus (Horse).